A 309-amino-acid polypeptide reads, in one-letter code: Aromatic prenyltransferase (309 aa).

Belongs to the aromatic prenyltransferase family.

Prenyltransferase that attaches isoprenoid moieties to carbon atoms of aromatic substrates in an enzyme-catalyzed Friedel-Crafts reaction. Shows specificity for dimethylallyl diphosphate (DMAPP) and does not accept geranyl diphosphate (GPP) or isopentenyl diphosphate (IPP). Prenylates the artificial substrate 2,7-dihydroxynaphthalene (2,7-DHN), as well as dihydrophenazine-1-carboxylic acid and 4-hydroxybenzoic acid at lower levels. Only traces of products are detected with aspulvinone E or flaviolin as substrates; and no product is formed with L-tryptophan, L-tyrosine, or 4-hydroxyphenylpyruvate. Ptf seems no to be involved in the prenylation reaction in the biosynthesis of aspulvinone H and J and the physiological function of ptf remains unknown. This is Aromatic prenyltransferase from Sclerotinia sclerotiorum (strain ATCC 18683 / 1980 / Ss-1) (White mold).